We begin with the raw amino-acid sequence, 724 residues long: uncharacterized protein (724 aa).

4 disordered regions span residues 1-23 (MEDREMSTKPESISSRPPEIPDN), 166-477 (PDGY…PPRD), 496-517 (EAHDSGTNTVVPLPDQPEAHGP), and 532-691 (DHPI…PALS). Polar residues-rich tracts occupy residues 227-245 (VSQSSFSPRTEGGPSTVNQ) and 270-296 (STTLGPAMNTFQRTTSPPVMHVTTSDA). Residues 304–322 (TRDHDRYGNGRGPDTDRLE) show a composition bias toward basic and acidic residues. The span at 403 to 413 (PSSSHSETPNM) shows a compositional bias: polar residues. Composition is skewed to basic and acidic residues over residues 550 to 560 (RNHEFTEDKRL) and 637 to 657 (LRHDSRVGTPKHLENVHDLAA). The segment covering 682–691 (RLAAASPALS) has biased composition (low complexity).

This is an uncharacterized protein from Neurospora crassa (strain ATCC 24698 / 74-OR23-1A / CBS 708.71 / DSM 1257 / FGSC 987).